The following is a 399-amino-acid chain: MTEKADLQPILDRAAAGGRITPEEALDLYRDAPLHALGAAADAVRRRRYAGTEHIATYIIERNINYTNVCVTACKFCAFYAAPKDTKKGWSRDLDDILRRCAETVELGGTQIMFQGGHHPDYGVEYYEEHFAAIKKEFPQLVIHSLGASEVEHMARISKVSVEEAIRRIHAAGLDSFAGAGAELLPERPRKAIAPLKESGERWLEIMEIAHGLGVESTSTMLMGTGETNAERIEHLRMIRDVQDRTGGFRAFIPYTYQPENNHLKGRTQATLFEYLRMIAIARVFLDNVAHIQGSWLTTGKEVGQLSLHYGADDLGSIMLEENVVSSAGAKHRSNRLEIIDLIRKAGRVPAQRATTYEHLVVHDDPANDPVDERVVSHISSTAIEGGTAHPELKLLAPN.

The region spanning 56–288 is the Radical SAM core domain; sequence ATYIIERNIN…IAIARVFLDN (233 aa). Positions 70, 74, and 77 each coordinate [4Fe-4S] cluster.

It belongs to the radical SAM superfamily. MqnC family. Requires [4Fe-4S] cluster as cofactor.

The catalysed reaction is dehypoxanthine futalosine + S-adenosyl-L-methionine = cyclic dehypoxanthinylfutalosinate + 5'-deoxyadenosine + L-methionine + H(+). Its pathway is quinol/quinone metabolism; menaquinone biosynthesis. Functionally, radical SAM enzyme that catalyzes the cyclization of dehypoxanthine futalosine (DHFL) into cyclic dehypoxanthine futalosine (CDHFL), a step in the biosynthesis of menaquinone (MK, vitamin K2). This chain is Cyclic dehypoxanthine futalosine synthase, found in Streptomyces coelicolor (strain ATCC BAA-471 / A3(2) / M145).